The primary structure comprises 302 residues: Deoxyribonuclease-1-like 1 (302 aa).

The first 18 residues, 1–18, serve as a signal peptide directing secretion; it reads MHYPTALLFLILVNGAQA. Catalysis depends on residues Glu-97 and His-148. The cysteines at positions 187 and 224 are disulfide-linked. The N-linked (GlcNAc...) asparagine glycan is linked to Asn-261.

It belongs to the DNase I family.

It is found in the endoplasmic reticulum. This chain is Deoxyribonuclease-1-like 1 (DNASE1L1), found in Chlorocebus aethiops (Green monkey).